Consider the following 515-residue polypeptide: Probable coatomer subunit delta (515 aa).

Residues 161–180 (AKQAMAEKAKELKRAQKEAL) are compositionally biased toward basic and acidic residues. The segment at 161–231 (AKQAMAEKAK…GGKALKLGGK (71 aa)) is disordered. The span at 187-198 (SYQSSTGISSSS) shows a compositional bias: low complexity. The MHD domain maps to 276 to 515 (REVVHVRTEE…TFNSENFEIV (240 aa)).

It belongs to the adaptor complexes medium subunit family. Delta-COP subfamily. Oligomeric complex that consists of at least the alpha, beta, beta', gamma, delta, epsilon and zeta subunits.

Its subcellular location is the cytoplasm. It is found in the golgi apparatus membrane. The protein resides in the cytoplasmic vesicle. The protein localises to the COPI-coated vesicle membrane. Functionally, the coatomer is a cytosolic protein complex that binds to dilysine motifs and reversibly associates with Golgi non-clathrin-coated vesicles, which further mediate biosynthetic protein transport from the ER, via the Golgi up to the trans Golgi network. Coatomer complex is required for budding from Golgi membranes, and is essential for the retrograde Golgi-to-ER transport of dilysine-tagged proteins. The protein is Probable coatomer subunit delta of Caenorhabditis elegans.